The following is a 284-amino-acid chain: MQSNATEHAALERVAPRGTALRIAHAVKRYGEREVLYGIDLEIAPGEFVAIVGRSGCGKSTLLRLIAGLEGIDGGSLHRDGAAGGGLHDDARVMFQDARLLPWKRVLDNVALGLPRTHRAQAAEVLAQVGLAERAGEWPARLSGGQRQRVALARALVHRPRLLLLDEPLGALDALTRIDMQNLIEGLWQRLGFTAVLVTHDVAEAVALADRVVLIEDGRIALDARIDLPRPRHRGAPAFARLEEAILNRVMQRKADPDEVTDARAHVARPSPWEVSAAAVGWAV.

The 222-residue stretch at 21-242 (LRIAHAVKRY…HRGAPAFARL (222 aa)) folds into the ABC transporter domain. 53–60 (GRSGCGKS) contributes to the ATP binding site.

This sequence belongs to the ABC transporter superfamily. Aliphatic sulfonates importer (TC 3.A.1.17.2) family. In terms of assembly, the complex is composed of two ATP-binding proteins (SsuB), two transmembrane proteins (SsuC) and a solute-binding protein (SsuA).

Its subcellular location is the cell inner membrane. It catalyses the reaction ATP + H2O + aliphatic sulfonate-[sulfonate-binding protein]Side 1 = ADP + phosphate + aliphatic sulfonateSide 2 + [sulfonate-binding protein]Side 1.. In terms of biological role, part of the ABC transporter complex SsuABC involved in aliphatic sulfonates import. Responsible for energy coupling to the transport system. The chain is Aliphatic sulfonates import ATP-binding protein SsuB from Ralstonia nicotianae (strain ATCC BAA-1114 / GMI1000) (Ralstonia solanacearum).